Reading from the N-terminus, the 227-residue chain is Cytochrome c oxidase subunit 2 (227 aa).

Topologically, residues 1–14 are mitochondrial intermembrane; the sequence is MAYSFQLGLQDATS. A helical transmembrane segment spans residues 15–45; that stretch reads PIMEELMNFHDHTLMIVFLISSLVLYIISLM. The Mitochondrial matrix segment spans residues 46–59; the sequence is LTTKLTHTSTMDAQ. The chain crosses the membrane as a helical span at residues 60–87; the sequence is EVETIWTILPAVILIMIALPSLRILYMM. The Mitochondrial intermembrane portion of the chain corresponds to 88 to 227; that stretch reads DEINNPVLTV…HFENWSASMI (140 aa). Residues histidine 161, cysteine 196, glutamate 198, cysteine 200, histidine 204, and methionine 207 each coordinate Cu cation. Glutamate 198 contributes to the Mg(2+) binding site.

This sequence belongs to the cytochrome c oxidase subunit 2 family. In terms of assembly, component of the cytochrome c oxidase (complex IV, CIV), a multisubunit enzyme composed of 14 subunits. The complex is composed of a catalytic core of 3 subunits MT-CO1, MT-CO2 and MT-CO3, encoded in the mitochondrial DNA, and 11 supernumerary subunits COX4I, COX5A, COX5B, COX6A, COX6B, COX6C, COX7A, COX7B, COX7C, COX8 and NDUFA4, which are encoded in the nuclear genome. The complex exists as a monomer or a dimer and forms supercomplexes (SCs) in the inner mitochondrial membrane with NADH-ubiquinone oxidoreductase (complex I, CI) and ubiquinol-cytochrome c oxidoreductase (cytochrome b-c1 complex, complex III, CIII), resulting in different assemblies (supercomplex SCI(1)III(2)IV(1) and megacomplex MCI(2)III(2)IV(2)). Found in a complex with TMEM177, COA6, COX18, COX20, SCO1 and SCO2. Interacts with TMEM177 in a COX20-dependent manner. Interacts with COX20. Interacts with COX16. The cofactor is Cu cation.

It localises to the mitochondrion inner membrane. It catalyses the reaction 4 Fe(II)-[cytochrome c] + O2 + 8 H(+)(in) = 4 Fe(III)-[cytochrome c] + 2 H2O + 4 H(+)(out). Component of the cytochrome c oxidase, the last enzyme in the mitochondrial electron transport chain which drives oxidative phosphorylation. The respiratory chain contains 3 multisubunit complexes succinate dehydrogenase (complex II, CII), ubiquinol-cytochrome c oxidoreductase (cytochrome b-c1 complex, complex III, CIII) and cytochrome c oxidase (complex IV, CIV), that cooperate to transfer electrons derived from NADH and succinate to molecular oxygen, creating an electrochemical gradient over the inner membrane that drives transmembrane transport and the ATP synthase. Cytochrome c oxidase is the component of the respiratory chain that catalyzes the reduction of oxygen to water. Electrons originating from reduced cytochrome c in the intermembrane space (IMS) are transferred via the dinuclear copper A center (CU(A)) of subunit 2 and heme A of subunit 1 to the active site in subunit 1, a binuclear center (BNC) formed by heme A3 and copper B (CU(B)). The BNC reduces molecular oxygen to 2 water molecules using 4 electrons from cytochrome c in the IMS and 4 protons from the mitochondrial matrix. This is Cytochrome c oxidase subunit 2 (MT-CO2) from Praomys jacksoni (African forest rat).